We begin with the raw amino-acid sequence, 275 residues long: Beta-lactamase OXA-15 (275 aa).

The N-terminal stretch at 1 to 21 (MAIRIFAILFSIFSLATFAHA) is a signal peptide. Catalysis depends on Ser-72, which acts as the Acyl-ester intermediate. Lys-75 carries the N6-carboxylysine modification. Residue 210 to 212 (KTG) participates in substrate binding.

It belongs to the class-D beta-lactamase family.

It catalyses the reaction a beta-lactam + H2O = a substituted beta-amino acid. In terms of biological role, hydrolyzes oxacillin, first-generation cephalosporins and ceftazidime. Does not hydrolyze cefotaxime or carbapenems. This Pseudomonas aeruginosa protein is Beta-lactamase OXA-15 (bla).